A 154-amino-acid polypeptide reads, in one-letter code: Endoribonuclease YbeY (154 aa).

His-114, His-118, and His-124 together coordinate Zn(2+).

Belongs to the endoribonuclease YbeY family. It depends on Zn(2+) as a cofactor.

Its subcellular location is the cytoplasm. In terms of biological role, single strand-specific metallo-endoribonuclease involved in late-stage 70S ribosome quality control and in maturation of the 3' terminus of the 16S rRNA. The protein is Endoribonuclease YbeY of Haemophilus influenzae (strain ATCC 51907 / DSM 11121 / KW20 / Rd).